A 335-amino-acid chain; its full sequence is Phosphate acyltransferase (335 aa).

This sequence belongs to the PlsX family. Homodimer. Probably interacts with PlsY.

The protein localises to the cytoplasm. It catalyses the reaction a fatty acyl-[ACP] + phosphate = an acyl phosphate + holo-[ACP]. The protein operates within lipid metabolism; phospholipid metabolism. Catalyzes the reversible formation of acyl-phosphate (acyl-PO(4)) from acyl-[acyl-carrier-protein] (acyl-ACP). This enzyme utilizes acyl-ACP as fatty acyl donor, but not acyl-CoA. The chain is Phosphate acyltransferase from Streptococcus equi subsp. zooepidemicus (strain MGCS10565).